The primary structure comprises 326 residues: Malate dehydrogenase (326 aa).

Residue 11-17 (GAAGQIG) coordinates NAD(+). Residues Arg92 and Arg98 each contribute to the substrate site. NAD(+) is bound by residues Asn105, Gln112, and 129 to 131 (VGN). Residues Asn131 and Arg162 each contribute to the substrate site. His187 acts as the Proton acceptor in catalysis.

Belongs to the LDH/MDH superfamily. MDH type 2 family.

It carries out the reaction (S)-malate + NAD(+) = oxaloacetate + NADH + H(+). Its function is as follows. Catalyzes the reversible oxidation of malate to oxaloacetate. This Alkalilimnicola ehrlichii (strain ATCC BAA-1101 / DSM 17681 / MLHE-1) protein is Malate dehydrogenase.